We begin with the raw amino-acid sequence, 75 residues long: Large ribosomal subunit protein bL31 (75 aa).

The protein belongs to the bacterial ribosomal protein bL31 family. Type A subfamily. As to quaternary structure, part of the 50S ribosomal subunit.

Functionally, binds the 23S rRNA. The polypeptide is Large ribosomal subunit protein bL31 (Chlorobium phaeovibrioides (strain DSM 265 / 1930) (Prosthecochloris vibrioformis (strain DSM 265))).